A 1893-amino-acid chain; its full sequence is CDK5 regulatory subunit-associated protein 2 (1893 aa).

A CM1 motif; interacts with the gTuRC region spans residues 51 to 94 (TVSPTRARNMKDFENQITELKKENFNLKLRIYFLEERMQQEFHG). Residues 58-196 (RNMKDFENQI…TEKALRLRLE (139 aa)) form an interaction with NCKAP5L region. Position 547 is a phosphoserine (serine 547). Positions 926–1208 (PGITNREAKK…LENLKQQLEE (283 aa)) are interaction with MAPRE1. Phosphothreonine is present on threonine 1001. Disordered stretches follow at residues 1015–1071 (AAYQ…NPED) and 1084–1105 (SKSQ…SINT). Positions 1034–1048 (WRDKEMDSDQQRSYE) are enriched in basic and acidic residues. Residue serine 1238 is modified to Phosphoserine. Residues 1347 to 1381 (LPESPEPSASHALSDYETSEKSFFSRDQKQDNETE) are disordered. Basic and acidic residues predominate over residues 1364–1381 (TSEKSFFSRDQKQDNETE). The residue at position 1490 (serine 1490) is a Phosphoserine. Composition is skewed to basic and acidic residues over residues 1500-1519 (SVKE…ERHN) and 1651-1661 (PDKHDGDKYPM). 3 disordered regions span residues 1500-1521 (SVKE…HNQQ), 1646-1706 (EVPL…ATST), and 1754-1774 (QTQE…PHPA). Serine 1663 and serine 1666 each carry phosphoserine. 2 stretches are compositionally biased toward polar residues: residues 1663–1706 (SDNS…ATST) and 1754–1766 (QTQE…SQEL). The interaction with CDK5R1 stretch occupies residues 1726–1768 (HVLGLIEDYEALLKQISQGQRLLAEMDIQTQEAPSSTSQELGT). Positions 1726 to 1893 (HVLGLIEDYE…GTCSPSRPGS (168 aa)) are interaction with PCNT and AKAP9. The segment at 1861 to 1870 (VVTHKILRKA) is required for centrosomal attachment, Golgi localization and CALM1 interaction. Position 1893 is a phosphoserine (serine 1893).

In terms of assembly, homodimer. Interacts with CDK5R1 (p35 form). CDK5RAP1, CDK5RAP2 and CDK5RAP3 show competitive binding to CDK5R1. May form a complex with CDK5R1 and CDK5. Interacts with pericentrin/PCNT; the interaction is leading to centrosomal and Golgi localization of CDK5RAP2 and PCNT. Interacts with AKAP9; the interaction targets CDK5RAP2 and AKAP9 to Golgi apparatus. Interacts with MAPRE1; the interaction is direct and targets CDK5RAP2 and EB1/MAPRE1 to microtubule plus ends. Interacts with TUBG1; the interaction is leading to the centrosomal localization of CDK5RAP2 and TUBG1. Interacts with TUBGCP3. Interacts with CALM1. Interacts with CDC20. Interacts with CEP68; degradation of CEP68 in early mitosis leads to removal of CDK5RAP2 from the centrosome which promotes centriole disengagement and subsequent centriole separation. Interacts with NCKAP5L. Forms a pericentrosomal complex with AKAP9, MAPRE1 and PDE4DIP isoform 13/MMG8/SMYLE; within this complex, MAPRE1 binding to CDK5RAP2 may be mediated by PDE4DIP. Interacts with LGALS3BP; this interaction may connect the pericentrosomal complex to the gamma-tubulin ring complex (gTuRC) to promote microtubule assembly and acetylation. Interacts with CCDC66. Associates (via CM1 motif) with TUBGCP2 of the gTuRC; the interaction plays a role in gTuRC activation. Post-translationally, phosphorylated in vitro by CDK5. In terms of tissue distribution, widely expressed. Expressed in heart, brain, placenta, lung, liver, skeletal muscle, kidney and pancreas.

It localises to the cytoplasm. It is found in the cytoskeleton. The protein localises to the microtubule organizing center. The protein resides in the centrosome. Its subcellular location is the golgi apparatus. Functionally, potential regulator of CDK5 activity via its interaction with CDK5R1. Negative regulator of centriole disengagement (licensing) which maintains centriole engagement and cohesion. Involved in regulation of mitotic spindle orientation. Plays a role in the spindle checkpoint activation by acting as a transcriptional regulator of both BUBR1 and MAD2 promoter. Together with EB1/MAPRE1, may promote microtubule polymerization, bundle formation, growth and dynamics at the plus ends. Regulates centrosomal maturation by recruitment of the gamma-tubulin ring complex (gTuRC) onto centrosomes. In complex with PDE4DIP isoform 13/MMG8/SMYLE, MAPRE1 and AKAP9, contributes to microtubules nucleation and extension from the centrosome to the cell periphery. Required for the recruitment of AKAP9 to centrosomes. Plays a role in neurogenesis. The sequence is that of CDK5 regulatory subunit-associated protein 2 (CDK5RAP2) from Homo sapiens (Human).